We begin with the raw amino-acid sequence, 312 residues long: Pantothenate kinase (312 aa).

Position 97–104 (Gly-97–Ser-104) interacts with ATP.

It belongs to the prokaryotic pantothenate kinase family.

It is found in the cytoplasm. It catalyses the reaction (R)-pantothenate + ATP = (R)-4'-phosphopantothenate + ADP + H(+). It functions in the pathway cofactor biosynthesis; coenzyme A biosynthesis; CoA from (R)-pantothenate: step 1/5. The chain is Pantothenate kinase from Mycobacterium sp. (strain JLS).